Reading from the N-terminus, the 640-residue chain is Autophagy-related protein 20 (640 aa).

Polar residues-rich tracts occupy residues 1–18 (MSDLNDVQENAKLNSETR) and 126–153 (AETCRTSLSGSINSMNGETSASEEPSVS). Disordered regions lie at residues 1 to 63 (MSDL…NNKV) and 126 to 156 (AETCRTSLSGSINSMNGETSASEEPSVSNRK). Serine 2 is subject to N-acetylserine. The PX domain occupies 140 to 301 (MNGETSASEE…DFLDPNNHNW (162 aa)). A 1,2-diacyl-sn-glycero-3-phospho-(1D-myo-inositol-3-phosphate) contacts are provided by arginine 192, serine 194, lysine 218, and arginine 267. Residues serine 361 and serine 363 each carry the phosphoserine modification. 2 coiled-coil regions span residues 475-512 (LQNEMIKKSLNSKRAQLEKLEAQNNEYKDVDKIIDNEM) and 562-593 (TASINLKKEIEQLSESLEVTENDLEVISKVIK).

The protein belongs to the sorting nexin family. In terms of assembly, forms a complex with SNX4 and ATG17.

The protein localises to the endosome membrane. It localises to the preautophagosomal structure membrane. Required for cytoplasm to vacuole transport (Cvt), pexophagy and mitophagy. Also involved in endoplasmic reticulum-specific autophagic process and is essential for the survival of cells subjected to severe ER stress. Functions in protein retrieval from the endocytic pathway. Required for proper sorting of the v-SNARE protein SNC1. The polypeptide is Autophagy-related protein 20 (ATG20) (Saccharomyces cerevisiae (strain ATCC 204508 / S288c) (Baker's yeast)).